Here is a 702-residue protein sequence, read N- to C-terminus: Ribosomal RNA large subunit methyltransferase K/L (702 aa).

In terms of domain architecture, THUMP spans 43-154; the sequence is LIYQSLMWSR…KETASIALDL (112 aa).

It belongs to the methyltransferase superfamily. RlmKL family.

It is found in the cytoplasm. It carries out the reaction guanosine(2445) in 23S rRNA + S-adenosyl-L-methionine = N(2)-methylguanosine(2445) in 23S rRNA + S-adenosyl-L-homocysteine + H(+). The catalysed reaction is guanosine(2069) in 23S rRNA + S-adenosyl-L-methionine = N(2)-methylguanosine(2069) in 23S rRNA + S-adenosyl-L-homocysteine + H(+). In terms of biological role, specifically methylates the guanine in position 2445 (m2G2445) and the guanine in position 2069 (m7G2069) of 23S rRNA. The chain is Ribosomal RNA large subunit methyltransferase K/L from Salmonella gallinarum (strain 287/91 / NCTC 13346).